Here is a 250-residue protein sequence, read N- to C-terminus: 5-oxoprolinase subunit A (250 aa).

Belongs to the LamB/PxpA family. As to quaternary structure, forms a complex composed of PxpA, PxpB and PxpC.

The enzyme catalyses 5-oxo-L-proline + ATP + 2 H2O = L-glutamate + ADP + phosphate + H(+). Catalyzes the cleavage of 5-oxoproline to form L-glutamate coupled to the hydrolysis of ATP to ADP and inorganic phosphate. The polypeptide is 5-oxoprolinase subunit A (Streptomyces avermitilis (strain ATCC 31267 / DSM 46492 / JCM 5070 / NBRC 14893 / NCIMB 12804 / NRRL 8165 / MA-4680)).